The chain runs to 236 residues: UPF0502 protein Bpro_3844 (236 aa).

The protein belongs to the UPF0502 family.

The protein is UPF0502 protein Bpro_3844 of Polaromonas sp. (strain JS666 / ATCC BAA-500).